The following is a 263-amino-acid chain: Insertion sequence IS21-like putative ATP-binding protein (263 aa).

114–121 (GPSGTGKT) lines the ATP pocket.

This sequence belongs to the IS21/IS1162 putative ATP-binding protein family.

The protein is Insertion sequence IS21-like putative ATP-binding protein (tnpB) of Bacteroides fragilis.